Reading from the N-terminus, the 184-residue chain is dITP/XTP pyrophosphatase (184 aa).

7–12 (TSNPGK) lines the substrate pocket. Positions 36 and 65 each coordinate Mg(2+). The active-site Proton acceptor is the Asp-65. Substrate-binding positions include Ser-66, 139-142 (FGFD), Lys-162, and 167-168 (HR).

The protein belongs to the HAM1 NTPase family. As to quaternary structure, homodimer. It depends on Mg(2+) as a cofactor.

The enzyme catalyses XTP + H2O = XMP + diphosphate + H(+). It catalyses the reaction dITP + H2O = dIMP + diphosphate + H(+). It carries out the reaction ITP + H2O = IMP + diphosphate + H(+). In terms of biological role, pyrophosphatase that catalyzes the hydrolysis of nucleoside triphosphates to their monophosphate derivatives, with a high preference for the non-canonical purine nucleotides XTP (xanthosine triphosphate), dITP (deoxyinosine triphosphate) and ITP. Seems to function as a house-cleaning enzyme that removes non-canonical purine nucleotides from the nucleotide pool, thus preventing their incorporation into DNA/RNA and avoiding chromosomal lesions. This chain is dITP/XTP pyrophosphatase, found in Thermococcus kodakarensis (strain ATCC BAA-918 / JCM 12380 / KOD1) (Pyrococcus kodakaraensis (strain KOD1)).